Consider the following 971-residue polypeptide: Nitrogen regulatory protein areA (971 aa).

Disordered regions lie at residues 39–61 (IHNA…DASA), 146–169 (HKEE…DAGS), 262–307 (QPAH…VNST), 390–416 (SASM…NVST), and 587–691 (DNNG…GNAP). The segment covering 42–59 (APTQRTXNSNRIPNSRDA) has biased composition (polar residues). The segment covering 146–159 (HKEEQQQRQDEADA) has biased composition (basic and acidic residues). Composition is skewed to polar residues over residues 262-274 (QPAH…SEFN) and 297-307 (FSPQVPAVNST). Residues 390–400 (SASMSNNNNNS) show a composition bias toward low complexity. Composition is skewed to polar residues over residues 597 to 606 (LERSQSQSFR) and 632 to 645 (NGFE…QSSP). Low complexity-rich tracts occupy residues 654–663 (SGFSSVAPSR) and 680–691 (AAAGNGNDGNAP). The GATA-type zinc finger occupies 694–718 (CTNCFTQTTPLWRRNPEGQPLCNAC). Residues 742–918 (NRGSGTNVPV…PFGSSAGLSS (177 aa)) form a disordered region. Residues 744–794 (GSGTNVPVGGSSTRSKKTASTLNSRKNSTLSMSTATANSTKPNSSNPTPRV) show a composition bias toward polar residues. Residues 796–826 (TPPATSQPPSSKDVDSPVSGTTSGANTAGST) are compositionally biased toward low complexity. Residues 832 to 845 (GGPGPSSGAVGGKG) show a composition bias toward gly residues. Residues 863-875 (SSMSMQRPATASS) show a composition bias toward polar residues. Over residues 892–918 (SMDIDSPDSTSSIDGPRPFGSSAGLSS) the composition is skewed to low complexity.

Its subcellular location is the nucleus. Functionally, major nitrogen regulatory protein. Positively acting regulatory gene of nitrogen metabolite repression. The polypeptide is Nitrogen regulatory protein areA (AREA) (Fusarium fujikuroi (Bakanae and foot rot disease fungus)).